The chain runs to 62 residues: Large ribosomal subunit protein eL24 (62 aa).

Cysteine 7, cysteine 10, cysteine 33, and cysteine 37 together coordinate Zn(2+). The segment at 7-37 (CSFCGREIEPGTGIMYVKNDGSILWFCSRKC) adopts a C4-type zinc-finger fold.

The protein belongs to the eukaryotic ribosomal protein eL24 family. Part of the 50S ribosomal subunit. Forms a cluster with proteins L3 and L14. The cofactor is Zn(2+).

Its function is as follows. Binds to the 23S rRNA. This is Large ribosomal subunit protein eL24 from Staphylothermus marinus (strain ATCC 43588 / DSM 3639 / JCM 9404 / F1).